A 305-amino-acid chain; its full sequence is Probable 5-dehydro-4-deoxyglucarate dehydratase (305 aa).

This sequence belongs to the DapA family.

The enzyme catalyses 5-dehydro-4-deoxy-D-glucarate + H(+) = 2,5-dioxopentanoate + CO2 + H2O. It participates in carbohydrate acid metabolism; D-glucarate degradation; 2,5-dioxopentanoate from D-glucarate: step 2/2. The polypeptide is Probable 5-dehydro-4-deoxyglucarate dehydratase (Pseudomonas entomophila (strain L48)).